The chain runs to 335 residues: tRNA N6-adenosine threonylcarbamoyltransferase (335 aa).

Residues His109, His113, and Tyr130 each contribute to the a divalent metal cation site. Residues 130–134 (YVSGG), Asp162, Gly177, Glu181, and Asn266 contribute to the substrate site. Asp294 serves as a coordination point for a divalent metal cation.

This sequence belongs to the KAE1 / TsaD family. Component of the EKC/KEOPS complex composed of at least GON7, TP53RK, TPRKB, OSGEP and LAGE3; the whole complex dimerizes. Interacts with PRAME. A divalent metal cation is required as a cofactor. In terms of tissue distribution, widely expressed at low level. Expressed in heart, placenta, liver, kidney, lung, brain, skeletal muscle and pancreas.

It is found in the cytoplasm. It localises to the nucleus. The enzyme catalyses L-threonylcarbamoyladenylate + adenosine(37) in tRNA = N(6)-L-threonylcarbamoyladenosine(37) in tRNA + AMP + H(+). Its function is as follows. Component of the EKC/KEOPS complex that is required for the formation of a threonylcarbamoyl group on adenosine at position 37 (t(6)A37) in tRNAs that read codons beginning with adenine. The complex is probably involved in the transfer of the threonylcarbamoyl moiety of threonylcarbamoyl-AMP (TC-AMP) to the N6 group of A37. OSGEP likely plays a direct catalytic role in this reaction, but requires other protein(s) of the complex to fulfill this activity. The chain is tRNA N6-adenosine threonylcarbamoyltransferase from Homo sapiens (Human).